The primary structure comprises 256 residues: Pimeloyl-[acyl-carrier protein] methyl ester esterase (256 aa).

One can recognise an AB hydrolase-1 domain in the interval 15-242 (HLVLLHGWGL…AAHAPFISHP (228 aa)). Substrate-binding positions include tryptophan 22, 82 to 83 (SL), and 143 to 147 (FLALQ). Catalysis depends on serine 82, which acts as the Nucleophile. Residues aspartate 207 and histidine 235 contribute to the active site. Substrate is bound at residue histidine 235.

Belongs to the AB hydrolase superfamily. Carboxylesterase BioH family. Monomer.

The protein resides in the cytoplasm. The catalysed reaction is 6-carboxyhexanoyl-[ACP] methyl ester + H2O = 6-carboxyhexanoyl-[ACP] + methanol + H(+). Its pathway is cofactor biosynthesis; biotin biosynthesis. Functionally, the physiological role of BioH is to remove the methyl group introduced by BioC when the pimeloyl moiety is complete. It allows to synthesize pimeloyl-ACP via the fatty acid synthetic pathway through the hydrolysis of the ester bonds of pimeloyl-ACP esters. The chain is Pimeloyl-[acyl-carrier protein] methyl ester esterase from Salmonella choleraesuis (strain SC-B67).